The sequence spans 889 residues: Cytoplasmic aconitate hydratase (889 aa).

Substrate contacts are provided by residues Gln86 and 205–207 (DSH). Residues Cys437, Cys503, and Cys506 each coordinate [4Fe-4S] cluster. Substrate-binding positions include Arg536, Arg541, Arg699, and 779–780 (SR).

This sequence belongs to the aconitase/IPM isomerase family. As to quaternary structure, interacts (when associated with the 4Fe-4S) with FBXL5. Interacts with frataxin(81-210). [4Fe-4S] cluster is required as a cofactor.

It localises to the cytoplasm. The protein resides in the cytosol. The catalysed reaction is citrate = D-threo-isocitrate. Functionally, bifunctional iron sensor that switches between 2 activities depending on iron availability. Iron deprivation, promotes its mRNA binding activity through which it regulates the expression of genes involved in iron uptake, sequestration and utilization. Binds to iron-responsive elements (IRES) in the untranslated region of target mRNAs preventing for instance the translation of ferritin and aminolevulinic acid synthase and stabilizing the transferrin receptor mRNA. Conversely, when cellular iron levels are high, binds a 4Fe-4S cluster which precludes RNA binding activity and promotes the aconitase activity, the isomerization of citrate to isocitrate via cis-aconitate. The polypeptide is Cytoplasmic aconitate hydratase (Aco1) (Rattus norvegicus (Rat)).